We begin with the raw amino-acid sequence, 288 residues long: Orotidine 5'-phosphate decarboxylase (288 aa).

Lys99 acts as the Proton donor in catalysis.

The protein belongs to the OMP decarboxylase family. Type 2 subfamily.

It carries out the reaction orotidine 5'-phosphate + H(+) = UMP + CO2. Its pathway is pyrimidine metabolism; UMP biosynthesis via de novo pathway; UMP from orotate: step 2/2. This is Orotidine 5'-phosphate decarboxylase (pyrF) from Myxococcus xanthus (strain DK1622).